Here is a 766-residue protein sequence, read N- to C-terminus: Protein transport protein Sec23B (766 aa).

Ala2 carries the post-translational modification N-acetylalanine. Zn(2+) is bound by residues Cys61, Cys66, Cys85, and Cys88. Position 564 is an N6-acetyllysine (Lys564). A Gelsolin-like repeat occupies Pro633–Leu719.

Belongs to the SEC23/SEC24 family. SEC23 subfamily. As to quaternary structure, COPII is composed of at least five proteins: the Sec23/24 complex, the Sec13/31 complex and Sar1. Interacts with SAR1A.

It localises to the cytoplasmic vesicle. Its subcellular location is the COPII-coated vesicle membrane. The protein localises to the endoplasmic reticulum membrane. The protein resides in the cytoplasm. It is found in the cytosol. In terms of biological role, component of the coat protein complex II (COPII) which promotes the formation of transport vesicles from the endoplasmic reticulum (ER). The coat has two main functions, the physical deformation of the endoplasmic reticulum membrane into vesicles and the selection of cargo molecules for their transport to the Golgi complex. The protein is Protein transport protein Sec23B of Pongo abelii (Sumatran orangutan).